A 316-amino-acid chain; its full sequence is MTEKPTLHPRNRHQGRYDFPSLIKAHPDLARFTITNPHGKPSIDFANPEAVRVFNRALLKAQYGIQHWDIPADYLCPPIPGRADYIHVAADLLADDNAGEVPKGAQVRALDIGVGANCIYPLLGHSDYRWRFLGSDIDPVALASAKAIVQANGLGKAIILRQQANRAHILSGLLQEGERFDLTLCNPPFHASRDEATRGSQRKWKNLGKQDPKRKLPVLNFGGQNNELWCEGGEIRFVSQLVGESVQYAERVLWFTSLVSKASNLPGIEAALKKAGAKAVRIIEMGQGQKQSRMVAWSFHDAAARLAWHAQRKSQA.

This sequence belongs to the methyltransferase superfamily. METTL16/RlmF family.

It is found in the cytoplasm. It catalyses the reaction adenosine(1618) in 23S rRNA + S-adenosyl-L-methionine = N(6)-methyladenosine(1618) in 23S rRNA + S-adenosyl-L-homocysteine + H(+). Functionally, specifically methylates the adenine in position 1618 of 23S rRNA. The chain is Ribosomal RNA large subunit methyltransferase F from Pseudomonas putida (strain GB-1).